The sequence spans 251 residues: 2,3-bisphosphoglycerate-dependent phosphoglycerate mutase (251 aa).

Residues 13-20 (RHGESEWN), 26-27 (TG), Arg65, 92-95 (ERHY), Lys103, 119-120 (RR), and 186-187 (GN) each bind substrate. Residue His14 is the Tele-phosphohistidine intermediate of the active site. Residue Glu92 is the Proton donor/acceptor of the active site.

It belongs to the phosphoglycerate mutase family. BPG-dependent PGAM subfamily.

The catalysed reaction is (2R)-2-phosphoglycerate = (2R)-3-phosphoglycerate. The protein operates within carbohydrate degradation; glycolysis; pyruvate from D-glyceraldehyde 3-phosphate: step 3/5. Functionally, catalyzes the interconversion of 2-phosphoglycerate and 3-phosphoglycerate. The protein is 2,3-bisphosphoglycerate-dependent phosphoglycerate mutase of Rhodococcus opacus (strain B4).